The following is a 277-amino-acid chain: Adenylate kinase (277 aa).

ATP is bound at residue 53-58 (GAGKGT). The segment at 73-102 (ATGDMLRAQVAAKTPLGREAKKIMDAGGLV) is NMP. AMP-binding positions include threonine 74, arginine 79, 100–102 (GLV), 129–132 (GFPR), and glutamine 136. The segment at 170–207 (GRLVHPASGRSYHKIFNPPKAPMTDDATGEPLIQRSDD) is LID. ATP contacts are provided by residues arginine 171 and 180–181 (SY). Residues arginine 204 and arginine 215 each coordinate AMP. Glutamine 243 contributes to the ATP binding site.

This sequence belongs to the adenylate kinase family. AK2 subfamily. As to quaternary structure, monomer.

Its subcellular location is the cytoplasm. It localises to the cytosol. It is found in the mitochondrion intermembrane space. The catalysed reaction is AMP + ATP = 2 ADP. Catalyzes the reversible transfer of the terminal phosphate group between ATP and AMP. Plays an important role in cellular energy homeostasis and in adenine nucleotide metabolism. Adenylate kinase activity is critical for regulation of the phosphate utilization and the AMP de novo biosynthesis pathways. The chain is Adenylate kinase from Phaeosphaeria nodorum (strain SN15 / ATCC MYA-4574 / FGSC 10173) (Glume blotch fungus).